Consider the following 690-residue polypeptide: Potassium-transporting ATPase ATP-binding subunit (690 aa).

Transmembrane regions (helical) follow at residues 49-69, 72-92, 229-249, and 253-273; these read SPVM…CFVP, AVPT…VLFA, VALD…VVTL, and ALFA…VTLI. D317 serves as the catalytic 4-aspartylphosphate intermediate. ATP contacts are provided by residues D354, E358, 385-392, and K403; that span reads FSAETRLS. 2 residues coordinate Mg(2+): D526 and D530. The next 3 membrane-spanning stretches (helical) occupy residues 596-616, 624-644, and 662-682; these read FAIL…LNVM, AILS…PLAL, and LLIY…AIDL.

It belongs to the cation transport ATPase (P-type) (TC 3.A.3) family. Type IA subfamily. The system is composed of three essential subunits: KdpA, KdpB and KdpC.

It localises to the cell inner membrane. The catalysed reaction is K(+)(out) + ATP + H2O = K(+)(in) + ADP + phosphate + H(+). Its function is as follows. Part of the high-affinity ATP-driven potassium transport (or Kdp) system, which catalyzes the hydrolysis of ATP coupled with the electrogenic transport of potassium into the cytoplasm. This subunit is responsible for energy coupling to the transport system and for the release of the potassium ions to the cytoplasm. The sequence is that of Potassium-transporting ATPase ATP-binding subunit from Pseudomonas aeruginosa (strain ATCC 15692 / DSM 22644 / CIP 104116 / JCM 14847 / LMG 12228 / 1C / PRS 101 / PAO1).